Consider the following 255-residue polypeptide: Malonyl-[acyl-carrier protein] O-methyltransferase (255 aa).

This sequence belongs to the methyltransferase superfamily.

It carries out the reaction malonyl-[ACP] + S-adenosyl-L-methionine = malonyl-[ACP] methyl ester + S-adenosyl-L-homocysteine. Its pathway is cofactor biosynthesis; biotin biosynthesis. Functionally, converts the free carboxyl group of a malonyl-thioester to its methyl ester by transfer of a methyl group from S-adenosyl-L-methionine (SAM). It allows to synthesize pimeloyl-ACP via the fatty acid synthetic pathway. This chain is Malonyl-[acyl-carrier protein] O-methyltransferase, found in Serratia marcescens.